The primary structure comprises 24 residues: Xenoposin-precursor fragment B1 (24 aa).

In terms of tissue distribution, expressed by the skin glands.

Its subcellular location is the secreted. In terms of biological role, has antibacterial activity. This Xenopus borealis (Kenyan clawed frog) protein is Xenoposin-precursor fragment B1.